Consider the following 80-residue polypeptide: MGIFMLKEILNKIFWHPDYKREDFEVVILHRGAEENKKAISLDDVELKGNYLIYFDTYIPLHRILEIRNKKTGEILYKKK.

It belongs to the UPF0248 family.

The polypeptide is UPF0248 protein MJ1316 (Methanocaldococcus jannaschii (strain ATCC 43067 / DSM 2661 / JAL-1 / JCM 10045 / NBRC 100440) (Methanococcus jannaschii)).